An 820-amino-acid chain; its full sequence is Leucine--tRNA ligase (820 aa).

The 'HIGH' region motif lies at 42 to 52; the sequence is PYPSGDLHMGH. The 'KMSKS' region motif lies at 576 to 580; that stretch reads KMSKS. An ATP-binding site is contributed by Lys579.

This sequence belongs to the class-I aminoacyl-tRNA synthetase family.

It is found in the cytoplasm. The enzyme catalyses tRNA(Leu) + L-leucine + ATP = L-leucyl-tRNA(Leu) + AMP + diphosphate. The sequence is that of Leucine--tRNA ligase from Coxiella burnetii (strain RSA 331 / Henzerling II).